The chain runs to 741 residues: Transketolase, chloroplastic (741 aa).

Over residues 1-19 (MAASSSLSTLSHHQTLLSH) the composition is skewed to low complexity. A disordered region spans residues 1 to 33 (MAASSSLSTLSHHQTLLSHPKTHLPTTPASSLL). The N-terminal 66 residues, 1–66 (MAASSSLSTL…VGSASAVVRA (66 aa)), are a transit peptide targeting the chloroplast. A compositionally biased stretch (polar residues) spans 24–33 (LPTTPASSLL). Residue His103 participates in substrate binding. Residues His143 and 192 to 194 (GPL) contribute to the thiamine diphosphate site. Asp233 lines the Mg(2+) pocket. Thiamine diphosphate is bound by residues Gly234 and Asn263. Mg(2+) contacts are provided by Asn263 and Ile265. 3 residues coordinate substrate: His340, Arg434, and Ser461. His340 serves as a coordination point for thiamine diphosphate. Thiamine diphosphate contacts are provided by Glu488 and Phe515. The Proton donor role is filled by Glu488. His539, Asp547, and Arg598 together coordinate substrate.

It belongs to the transketolase family. In terms of assembly, homodimer. Mg(2+) is required as a cofactor. The cofactor is Ca(2+). It depends on Mn(2+) as a cofactor. Requires Co(2+) as cofactor. Thiamine diphosphate serves as cofactor.

Its subcellular location is the plastid. It is found in the chloroplast thylakoid membrane. The catalysed reaction is D-sedoheptulose 7-phosphate + D-glyceraldehyde 3-phosphate = aldehydo-D-ribose 5-phosphate + D-xylulose 5-phosphate. It functions in the pathway carbohydrate biosynthesis; Calvin cycle. Catalyzes the reversible transfer of a two-carbon ketol group from fructose-6-phosphate or sedoheptulose-7-phosphate to glyceraldehyde-3-phosphate to yield xylulose-5-phosphate and erythrose-4-phosphate or ribose-5-phosphate, respectively. The sequence is that of Transketolase, chloroplastic from Spinacia oleracea (Spinach).